The following is a 721-amino-acid chain: Glycine--tRNA ligase beta subunit (721 aa).

It belongs to the class-II aminoacyl-tRNA synthetase family. Tetramer of two alpha and two beta subunits.

It is found in the cytoplasm. It carries out the reaction tRNA(Gly) + glycine + ATP = glycyl-tRNA(Gly) + AMP + diphosphate. This is Glycine--tRNA ligase beta subunit from Sinorhizobium medicae (strain WSM419) (Ensifer medicae).